A 191-amino-acid chain; its full sequence is dCTP deaminase (191 aa).

DCTP contacts are provided by residues 112 to 117 (KSTYAR), 136 to 138 (TLE), Gln-157, Tyr-173, and Gln-183. Residue Glu-138 is the Proton donor/acceptor of the active site.

This sequence belongs to the dCTP deaminase family. In terms of assembly, homotrimer.

It carries out the reaction dCTP + H2O + H(+) = dUTP + NH4(+). Its pathway is pyrimidine metabolism; dUMP biosynthesis; dUMP from dCTP (dUTP route): step 1/2. Functionally, catalyzes the deamination of dCTP to dUTP. This chain is dCTP deaminase, found in Psychrobacter arcticus (strain DSM 17307 / VKM B-2377 / 273-4).